The sequence spans 95 residues: Neurexophilin-3 (95 aa).

N-linked (GlcNAc...) asparagine glycosylation is found at Asn-1 and Asn-7. Residues 1–21 are III; that stretch reads NATGQGNISISLVPPSKAVEX. Residues 22–30 are IV (linker domain); it reads HQXQQIFIE. The tract at residues 31–95 is v (Cys-rich); that stretch reads AKASKIFNCR…YIAFYSTDYR (65 aa).

It belongs to the neurexophilin family.

The protein resides in the secreted. Its function is as follows. May be signaling molecules that resemble neuropeptides. Ligand for alpha-neurexins. The chain is Neurexophilin-3 (NXPH3) from Macaca mulatta (Rhesus macaque).